The sequence spans 182 residues: Bifunctional protein PyrR (182 aa).

Residues 99 to 111 carry the PRPP-binding motif; it reads IVLVDDVIFTGRT.

It belongs to the purine/pyrimidine phosphoribosyltransferase family. PyrR subfamily. In terms of assembly, homodimer and homohexamer; in equilibrium.

The enzyme catalyses UMP + diphosphate = 5-phospho-alpha-D-ribose 1-diphosphate + uracil. In terms of biological role, regulates transcriptional attenuation of the pyrimidine nucleotide (pyr) operon by binding in a uridine-dependent manner to specific sites on pyr mRNA. This disrupts an antiterminator hairpin in the RNA and favors formation of a downstream transcription terminator, leading to a reduced expression of downstream genes. Functionally, also displays a weak uracil phosphoribosyltransferase activity which is not physiologically significant. This chain is Bifunctional protein PyrR, found in Caldicellulosiruptor saccharolyticus (strain ATCC 43494 / DSM 8903 / Tp8T 6331).